Here is a 266-residue protein sequence, read N- to C-terminus: GFP-like fluorescent chromoprotein cFP484 (266 aa).

The 2-iminomethyl-5-imidazolinone (Gln-Gly) cross-link spans 104–106 (QYG). Tyr-105 is modified (2,3-didehydrotyrosine).

This sequence belongs to the GFP family. In terms of processing, contains a chromophore consisting of modified amino acid residues. The chromophore is formed by autocatalytic backbone condensation between Xaa-N and Gly-(N+2), oxidation of Tyr-(N+1) to didehydrotyrosine, and formation of a double bond to the alpha-amino nitrogen of residue Xaa-N. Maturation of the chromophore requires nothing other than molecular oxygen. The precise stereochemistry of the tyrosine has not been determined. As to expression, tentacle and oral disk.

Pigment protein that is green in color. The sequence is that of GFP-like fluorescent chromoprotein cFP484 from Clavularia sp. (Brown star polyp).